The chain runs to 519 residues: Bifunctional dihydrofolate reductase-thymidylate synthase 1 (519 aa).

At Ala-2 the chain carries N-acetylalanine. Residues 21–198 form the DHFR domain; that stretch reads TYQVVVAATK…LRFCFTTFVR (178 aa). Val-25 lines the substrate pocket. NADP(+) is bound by residues Ala-27 and 33 to 39; that span reads GIGKDGK. Asp-47 provides a ligand contact to substrate. NADP(+) contacts are provided by residues 71-73 and 92-95; these read RKT and LTRS. Ile-134 provides a ligand contact to substrate. Residue 135 to 142 coordinates NADP(+); it reads GGGDILRE. Thr-155 provides a ligand contact to substrate. The interval 201-234 is hinge; the sequence is SSADESSDESNGSQSLQFDGKKFLFLPKMVFDQH. Residues 235–519 form a thymidylate synthase region; the sequence is EEFLYLNMVE…HKKIEMKMAV (285 aa). Arg-256 contributes to the dUMP binding site. Residue Cys-401 is part of the active site. DUMP is bound by residues His-402, 420–424, Asn-432, and 462–464; these read QRSAD and HVY.

This sequence in the N-terminal section; belongs to the dihydrofolate reductase family. It in the C-terminal section; belongs to the thymidylate synthase family. In terms of assembly, heterodimer or homodimer.

It catalyses the reaction (6S)-5,6,7,8-tetrahydrofolate + NADP(+) = 7,8-dihydrofolate + NADPH + H(+). The catalysed reaction is dUMP + (6R)-5,10-methylene-5,6,7,8-tetrahydrofolate = 7,8-dihydrofolate + dTMP. It participates in cofactor biosynthesis; tetrahydrofolate biosynthesis; 5,6,7,8-tetrahydrofolate from 7,8-dihydrofolate: step 1/1. Its function is as follows. Bifunctional enzyme. Involved in de novo dTMP biosynthesis. Key enzyme in folate metabolism. Can play two different roles depending on the source of dihydrofolate: de novo synthesis of tetrahydrofolate or recycling of the dihydrofolate released as one of the end products of the TS catalyzed reaction. Catalyzes an essential reaction for de novo glycine and purine synthesis, DNA precursor synthesis, and for the conversion of dUMP to dTMP. This chain is Bifunctional dihydrofolate reductase-thymidylate synthase 1 (THY-1), found in Arabidopsis thaliana (Mouse-ear cress).